Here is a 297-residue protein sequence, read N- to C-terminus: ClpXP adapter protein SpxH (297 aa).

It belongs to the SpxH family. Interacts with Spx.

The protein localises to the cytoplasm. Functionally, adapter protein required for efficient degradation of Spx by ClpXP under non-stress conditions. Interaction with Spx stabilizes Spx and exposes the C-terminus of Spx for recognition and proteolysis by ClpXP. The sequence is that of ClpXP adapter protein SpxH from Bacillus thuringiensis subsp. konkukian (strain 97-27).